Here is a 150-residue protein sequence, read N- to C-terminus: Large ribosomal subunit protein bL9 (150 aa).

Belongs to the bacterial ribosomal protein bL9 family.

Binds to the 23S rRNA. The sequence is that of Large ribosomal subunit protein bL9 from Streptococcus equi subsp. equi (strain 4047).